The sequence spans 510 residues: Facilitated glucose transporter protein 1 (510 aa).

The disordered stretch occupies residues 1–29 (MSEKSRSDTSATASLSDSSKSPSSYSTPG). Over 1-46 (MSEKSRSDTSATASLSDSSKSPSSYSTPGTTTQKIIFPDGKLTKCL) the chain is Cytoplasmic. Over residues 8 to 29 (DTSATASLSDSSKSPSSYSTPG) the composition is skewed to low complexity. The helical transmembrane segment at 47-67 (AFSAFVITLASFQFGYHIGCV) threads the bilayer. At 68–100 (NAPGGLITEWIIGSHKDLFDKELSRENADLAWS) the chain is on the extracellular side. A helical transmembrane segment spans residues 101-121 (VAVSVFAVGGMIGGLSSGWLA). Over 122 to 127 (DKVGRR) the chain is Cytoplasmic. The chain crosses the membrane as a helical span at residues 128–146 (GALFYNNLLALAAAALMGL). At 147-160 (AKSVGAYPMVILGR) the chain is on the extracellular side. A helical transmembrane segment spans residues 161 to 181 (LIIGLNCGFSSALVPMFLTEI). Residues 182–195 (SPNNLRGMLGSLHQ) are Cytoplasmic-facing. Glutamine 195 provides a ligand contact to D-glucose. The chain crosses the membrane as a helical span at residues 196–216 (LLVTIAILVSQIFGLPHLLGT). Topologically, residues 217–219 (GDR) are extracellular. The helical transmembrane segment at 220–240 (WPLIFAFTVVPAVLQLALLML) threads the bilayer. At 241 to 299 (CPESPKYTMAVRGQRNEAESALKKLRDTEDVSTEIEAMQEEATAAGVQEKPKMGDMFKG) the chain is on the cytoplasmic side. The helical transmembrane segment at 300 to 320 (ALLWPMSIAIMMMLAQQLSGI) threads the bilayer. Residues 315-316 (QQ), asparagine 321, and asparagine 352 each bind D-glucose. The Extracellular segment spans residues 321–341 (NVAMFYSTVIFRGAGLTGNEP). The chain crosses the membrane as a helical span at residues 342-362 (FYATIGMGAVNVIMTLISVWL). Residues 363 to 373 (VDHPKFGRRSL) are Cytoplasmic-facing. Residues 374 to 394 (LLAGLTGMFVSTLLLVGALTI) traverse the membrane as a helical segment. At 395–409 (QNSGGDKWASYSAIG) the chain is on the extracellular side. The helical transmembrane segment at 410 to 430 (FVLLFVISFATGPGAIPWFFV) threads the bilayer. Residue tryptophan 427 coordinates D-glucose. Residues 431–445 (SEIFDSSARGNANSI) lie on the Cytoplasmic side of the membrane. Residues 446-464 (AVMVNWAANLLVGLTFLPI) form a helical membrane-spanning segment. Over 465–470 (NNLMQQ) the chain is Extracellular. A helical transmembrane segment spans residues 471-491 (YSFFIFSGFLAFFIFYTWKFV). Topologically, residues 492–510 (PETKGKSIEQIQAEFEKRK) are cytoplasmic.

The protein belongs to the major facilitator superfamily. Sugar transporter (TC 2.A.1.1) family. Glucose transporter subfamily. Isoform a is expressed in pharyngeal muscle and intestinal cells in both embryos and adults (at protein level).

It localises to the cell membrane. The protein resides in the basolateral cell membrane. Functionally, facilitative glucose transporter that plays a role in glucose metabolism and regulation of longevity. May also play a role in lipid metabolism. Glucose transport activity of isoform a is competitively inhibited by mannose, galactose and fructose, suggesting ability to transport also other hexose sugars. This is Facilitated glucose transporter protein 1 from Caenorhabditis elegans.